Here is a 403-residue protein sequence, read N- to C-terminus: S-adenosylmethionine synthase (403 aa).

Histidine 16 contributes to the ATP binding site. Mg(2+) is bound at residue aspartate 18. Glutamate 44 lines the K(+) pocket. 2 residues coordinate L-methionine: glutamate 57 and glutamine 100. The segment at 100 to 110 (QSPDIAQGVDR) is flexible loop. Positions 106–126 (QGVDRSYESRSGSASTDAHDL) are disordered. ATP-binding positions include 176 to 178 (DGK), 248 to 249 (KF), aspartate 257, 263 to 264 (RK), alanine 280, and lysine 284. Aspartate 257 contacts L-methionine. Lysine 288 serves as a coordination point for L-methionine.

The protein belongs to the AdoMet synthase family. Homotetramer; dimer of dimers. Mg(2+) is required as a cofactor. It depends on K(+) as a cofactor.

It localises to the cytoplasm. The catalysed reaction is L-methionine + ATP + H2O = S-adenosyl-L-methionine + phosphate + diphosphate. It functions in the pathway amino-acid biosynthesis; S-adenosyl-L-methionine biosynthesis; S-adenosyl-L-methionine from L-methionine: step 1/1. Its function is as follows. Catalyzes the formation of S-adenosylmethionine (AdoMet) from methionine and ATP. The overall synthetic reaction is composed of two sequential steps, AdoMet formation and the subsequent tripolyphosphate hydrolysis which occurs prior to release of AdoMet from the enzyme. This is S-adenosylmethionine synthase from Clavibacter sepedonicus (Clavibacter michiganensis subsp. sepedonicus).